The primary structure comprises 754 residues: Phosphoribosylformylglycinamidine synthase subunit PurL (754 aa).

His-54 is a catalytic residue. Positions 57 and 101 each coordinate ATP. Glu-103 contributes to the Mg(2+) binding site. Substrate-binding positions include 104-107 and Arg-126; that span reads SHNH. His-105 serves as the catalytic Proton acceptor. Asp-127 provides a ligand contact to Mg(2+). Gln-252 is a substrate binding site. Position 280 (Asp-280) interacts with Mg(2+). Position 324-326 (324-326) interacts with substrate; the sequence is ESQ. The tract at residues 386–412 is disordered; that stretch reads PVYQRPVSRPESQEALNADSSKGLPRP. Asn-512 and Gly-549 together coordinate ATP. Residue Asn-550 participates in Mg(2+) binding. Ser-552 serves as a coordination point for substrate.

It belongs to the FGAMS family. In terms of assembly, monomer. Part of the FGAM synthase complex composed of 1 PurL, 1 PurQ and 2 PurS subunits.

The protein resides in the cytoplasm. It carries out the reaction N(2)-formyl-N(1)-(5-phospho-beta-D-ribosyl)glycinamide + L-glutamine + ATP + H2O = 2-formamido-N(1)-(5-O-phospho-beta-D-ribosyl)acetamidine + L-glutamate + ADP + phosphate + H(+). It participates in purine metabolism; IMP biosynthesis via de novo pathway; 5-amino-1-(5-phospho-D-ribosyl)imidazole from N(2)-formyl-N(1)-(5-phospho-D-ribosyl)glycinamide: step 1/2. In terms of biological role, part of the phosphoribosylformylglycinamidine synthase complex involved in the purines biosynthetic pathway. Catalyzes the ATP-dependent conversion of formylglycinamide ribonucleotide (FGAR) and glutamine to yield formylglycinamidine ribonucleotide (FGAM) and glutamate. The FGAM synthase complex is composed of three subunits. PurQ produces an ammonia molecule by converting glutamine to glutamate. PurL transfers the ammonia molecule to FGAR to form FGAM in an ATP-dependent manner. PurS interacts with PurQ and PurL and is thought to assist in the transfer of the ammonia molecule from PurQ to PurL. The polypeptide is Phosphoribosylformylglycinamidine synthase subunit PurL (Mycobacterium leprae (strain Br4923)).